We begin with the raw amino-acid sequence, 638 residues long: 3D-(3,5/4)-trihydroxycyclohexane-1,2-dione hydrolase (638 aa).

Residue Glu67 participates in thiamine diphosphate binding. The thiamine pyrophosphate binding stretch occupies residues 442–523; the sequence is SLPGDLQRLW…INIMLFDNSG (82 aa). Mg(2+) contacts are provided by Asp494 and Asn521.

Belongs to the TPP enzyme family. Mg(2+) serves as cofactor. Requires thiamine diphosphate as cofactor.

The catalysed reaction is 3D-3,5/4-trihydroxycyclohexane-1,2-dione + H2O = 5-deoxy-D-glucuronate + H(+). Its pathway is polyol metabolism; myo-inositol degradation into acetyl-CoA; acetyl-CoA from myo-inositol: step 3/7. Involved in the cleavage of the C1-C2 bond of 3D-(3,5/4)-trihydroxycyclohexane-1,2-dione (THcHDO) to yield 5-deoxy-glucuronate (5DG). This chain is 3D-(3,5/4)-trihydroxycyclohexane-1,2-dione hydrolase, found in Listeria monocytogenes serovar 1/2a (strain ATCC BAA-679 / EGD-e).